We begin with the raw amino-acid sequence, 332 residues long: Polyprenyl transferase yanG (332 aa).

The next 8 helical transmembrane spans lie at 42–62 (IWGA…LAFA), 72–92 (VTAT…FFVV), 145–165 (PAVT…PFMK), 170–190 (FPQV…WVGV), 200–220 (ALPL…FYAT), 242–262 (VKIL…MTAL), 266–286 (LSLI…PWHV), and 300–320 (VFKA…LELV).

This sequence belongs to the UbiA prenyltransferase family. Mg(2+) is required as a cofactor.

The protein localises to the membrane. The protein operates within secondary metabolite biosynthesis; terpenoid biosynthesis. In terms of biological role, polyprenyl transferase; part of the gene cluster that mediates the biosynthesis of yanuthone D, a fungal isoprenoid epoxycyclohexenone that acts as an antibiotic against fungi and bacteria. The first step of the pathway is the synthesis of 6-methylsalicylic acid (6-MSA) by the polyketide synthase yanA. 6-MSA is then converted to m-cresol by the decarboxylase yanB. The cytochrome P450 monooxygenase yanC then catalyzes the oxidation of m-cresol to toluquinol. Epoxidation of toluquinol is then performed by the short chain dehydrogenase yanD, with the help of yanE, and a further prenylation by yanG leads to 7-deacetoxyyanuthone A. The next step is the hydroxylation of C-22 of 7-deacetoxyyanuthone A by the cytochrome P450 monooxygenase yanH to yield 22-deacetylyanuthone A. O-Mevalon transferase yanI then attaches mevalon to the hydroxyl group of 22-deacetylyanuthone A to produce yanuthone E. Finally, the FAD-dependent monooxygenase yanF oxidizes the hydroxyl group at C15 of yanuthone E to form yanuthone D. Furthermore, several branching points in the pathway lead to the production of yanuthones F and G from 7-deacetoxyyanuthone A; yanuthones H and I from 22-deacetylyanuthone A; and yanuthone J from yanuthone E. YanG is also involved in the synthesis of yanuthone X1 which does not have 6-methylsalicylic acid (6-MSA) as precursor. This chain is Polyprenyl transferase yanG, found in Aspergillus niger (strain ATCC 1015 / CBS 113.46 / FGSC A1144 / LSHB Ac4 / NCTC 3858a / NRRL 328 / USDA 3528.7).